A 124-amino-acid chain; its full sequence is Small ribosomal subunit protein uS13 (124 aa).

A compositionally biased stretch (basic residues) spans 93–117; that stretch reads KNLPVRGQRTRTNARTRKGPRKTVA. The segment at 93–124 is disordered; that stretch reads KNLPVRGQRTRTNARTRKGPRKTVANKKIESK.

This sequence belongs to the universal ribosomal protein uS13 family. Part of the 30S ribosomal subunit. Forms a loose heterodimer with protein S19. Forms two bridges to the 50S subunit in the 70S ribosome.

In terms of biological role, located at the top of the head of the 30S subunit, it contacts several helices of the 16S rRNA. In the 70S ribosome it contacts the 23S rRNA (bridge B1a) and protein L5 of the 50S subunit (bridge B1b), connecting the 2 subunits; these bridges are implicated in subunit movement. Contacts the tRNAs in the A and P-sites. The polypeptide is Small ribosomal subunit protein uS13 (Mycoplasma genitalium (strain ATCC 33530 / DSM 19775 / NCTC 10195 / G37) (Mycoplasmoides genitalium)).